Reading from the N-terminus, the 516-residue chain is Calcium and calcium/calmodulin-dependent serine/threonine-protein kinase (516 aa).

Residues 13-298 form the Protein kinase domain; the sequence is YEVVDVLGRG…ASDLLRHPWV (286 aa). Residues 19–27 and lysine 43 contribute to the ATP site; that span reads LGRGGFSIV. Aspartate 163 (proton acceptor) is an active-site residue. At threonine 263 the chain carries Phosphothreonine. A calmodulin-binding region spans residues 321–334; it reads ARRKLRAAAIASVL. Residues 343-363 are a coiled coil; the sequence is KRLRNLLGTHDLTSEELDNLR. 3 EF-hand domains span residues 392-427, 428-463, and 470-505; these read SLIP…LRNS, RGDD…LPEE, and TEPG…DSAL. Ca(2+) contacts are provided by aspartate 405, asparagine 407, aspartate 409, threonine 411, glutamate 416, aspartate 441, aspartate 443, serine 445, cysteine 447, glutamate 452, aspartate 483, aspartate 485, aspartate 487, lysine 489, and glutamate 494.

This sequence belongs to the protein kinase superfamily. CAMK Ser/Thr protein kinase family. CaMK subfamily. Autophosphorylation. In terms of tissue distribution, mainly expressed in roots and panicles. Detected in leaves, shoots and culms.

It is found in the nucleus. It localises to the cytoplasm. Its subcellular location is the cell membrane. It carries out the reaction L-seryl-[protein] + ATP = O-phospho-L-seryl-[protein] + ADP + H(+). It catalyses the reaction L-threonyl-[protein] + ATP = O-phospho-L-threonyl-[protein] + ADP + H(+). In terms of biological role, calcium- and calmodulin-dependent protein kinase required for arbuscular mycorrhizal (AM) symbiosis. Involved in response to water deprivation stress. Required for abscisic acid-induced antioxidant defense and oxidative stress tolerance during dehydration stress. Functions upstream of MPK1 in an abscisic acid signaling pathway that regulates the activities of antioxidant enzymes and the production of hydrogen peroxide. This chain is Calcium and calcium/calmodulin-dependent serine/threonine-protein kinase (CCAMK), found in Oryza sativa subsp. japonica (Rice).